The following is a 276-amino-acid chain: Malectin-B (276 aa).

The N-terminal stretch at 1–26 (MLSIRTVLGPLAAILLTVIGPFGAHG) is a signal peptide. Topologically, residues 27-253 (SGLADKVMWA…TPNPYASDNS (227 aa)) are lumenal. Residues Y67, Y89, Y116, F117, and D186 each coordinate a carbohydrate. The interval 202-249 (DVPQLQPHPGLEKKEEEEEEEEEEGSPSKKQSNKNRVQSGPRTPNPYA) is disordered. Residues 216-226 (EEEEEEEEEEG) show a composition bias toward acidic residues. A compositionally biased stretch (polar residues) spans 229–249 (SKKQSNKNRVQSGPRTPNPYA). An N-linked (GlcNAc...) asparagine glycan is attached at N252. The helical transmembrane segment at 254 to 274 (SLMFPILVAFGVFIPTLFCLC) threads the bilayer. The Cytoplasmic segment spans residues 275 to 276 (RL).

Belongs to the malectin family.

Its subcellular location is the endoplasmic reticulum membrane. Carbohydrate-binding protein with a strong ligand preference for Glc2-N-glycan. May play a role in the early steps of protein N-glycosylation. Can bind di- or higher oligomers but not monomers of glucose, including maltose, maltotriose, maltotetraose, maltoheptaose, nigerose, kojibose, cellobiose and isomaltose, although based on their subcellular locations, these are unlikely to all be physiological ligands. The chain is Malectin-B from Xenopus laevis (African clawed frog).